The primary structure comprises 147 residues: Myoglobin (147 aa).

Residues 2-141 (ADFDAVLKFW…FIADMDANYK (140 aa)) enclose the Globin domain. A nitrite-binding site is contributed by His-60. Residue His-60 participates in O2 binding. His-89 contributes to the heme b binding site.

It belongs to the globin family. In terms of assembly, monomeric.

It is found in the cytoplasm. The protein resides in the sarcoplasm. The catalysed reaction is Fe(III)-heme b-[protein] + nitric oxide + H2O = Fe(II)-heme b-[protein] + nitrite + 2 H(+). It catalyses the reaction H2O2 + AH2 = A + 2 H2O. In terms of biological role, monomeric heme protein which primary function is to store oxygen and facilitate its diffusion within muscle tissues. Reversibly binds oxygen through a pentacoordinated heme iron and enables its timely and efficient release as needed during periods of heightened demand. Depending on the oxidative conditions of tissues and cells, and in addition to its ability to bind oxygen, it also has a nitrite reductase activity whereby it regulates the production of bioactive nitric oxide. Under stress conditions, like hypoxia and anoxia, it also protects cells against reactive oxygen species thanks to its pseudoperoxidase activity. The protein is Myoglobin (mb) of Scomber japonicus (Chub mackerel).